The following is a 607-amino-acid chain: MKWITLICLLISSSFIESRILFKRDTDADHHKHIADVYTALTERTFKGLTLAIVSQNLQKCSLEELSKLVNEINDFAKSCINDKTPECEKPVGTLFFDKLCADPAVGVNYEWSKECCAKQDPERAQCFKAHRDHEHTSIKPEPEETCKLLKEHPDDLLSAFIHEEARNHPDLYPPAVLALTKQYHKLAEHCCEEEDKEKCFSEKMKQLMKQSHSIEDKQHHFCWILDNFPEKVLKALNLARVSHRYPKAEFKLAHNFTEEVTHFIKDCCHDDMFECMTERLELTEHTCQHKDELSSKLEKCCNIPLLERTYCIVTLENDDVPAELSQPITEFTEDPHVCEKYAENNEVFLGRYLHAVSRKHQELSEQFLLQSAKEYESLLNKCCKTDNPPECYKDGADRFMNEAKERFAYLKQNCDILHEHGEYLFENELLIRYTKKMPQVSDETLIGIAHQMADIGEHCCAVPENQRMPCAEGDLTILIGKMCERQKKTFINNHVAHCCTDSYSGMRSCFTALGPDEDYVPPPVTDDTFHFDDKICTANDKEKQHIKQKFLVKLIKVSPKLEKNHIDECSAEFLKMVQKCCTADEHQPCFDTEKPVLIEHCQKLHP.

Residues 1-18 form the signal peptide; it reads MKWITLICLLISSSFIES. The propeptide occupies 19–24; sequence RILFKR. 3 consecutive Albumin domains span residues 22–209, 210–402, and 403–600; these read FKRD…KQLM, KQSH…RFMN, and EAKE…VLIE. Cu cation is bound at residue H30. 17 cysteine pairs are disulfide-bonded: C80–C88, C101–C117, C116–C127, C147–C192, C191–C200, C223–C269, C268–C276, C288–C302, C301–C312, C339–C384, C383–C392, C415–C461, C460–C471, C484–C500, C499–C510, C537–C582, and C581–C590.

This sequence belongs to the ALB/AFP/VDB family. Plasma.

It is found in the secreted. Its function is as follows. Serum albumin, the main protein of plasma, has a good binding capacity for water, Ca(2+), Na(+), K(+), fatty acids, hormones, bilirubin and drugs. Its main function is the regulation of the colloidal osmotic pressure of blood. The chain is Albumin B (alb-b) from Xenopus laevis (African clawed frog).